The primary structure comprises 83 residues: Large ribosomal subunit protein bL31B (83 aa).

It belongs to the bacterial ribosomal protein bL31 family. Type B subfamily. As to quaternary structure, part of the 50S ribosomal subunit.

The sequence is that of Large ribosomal subunit protein bL31B from Tropheryma whipplei (strain TW08/27) (Whipple's bacillus).